A 213-amino-acid polypeptide reads, in one-letter code: GTP cyclohydrolase 1 (213 aa).

The segment at 1 to 27 (MDDVVKSLLQRTTSSLTKPAPARPSRE) is disordered. 3 residues coordinate Zn(2+): cysteine 100, histidine 103, and cysteine 172.

This sequence belongs to the GTP cyclohydrolase I family. In terms of assembly, homomer.

The catalysed reaction is GTP + H2O = 7,8-dihydroneopterin 3'-triphosphate + formate + H(+). It participates in cofactor biosynthesis; 7,8-dihydroneopterin triphosphate biosynthesis; 7,8-dihydroneopterin triphosphate from GTP: step 1/1. This is GTP cyclohydrolase 1 from Beijerinckia indica subsp. indica (strain ATCC 9039 / DSM 1715 / NCIMB 8712).